Reading from the N-terminus, the 105-residue chain is Dynein axonemal light chain 4 (105 aa).

The protein belongs to the dynein light chain family. Consists of at least two heavy chains and a number of intermediate and light chains.

The protein localises to the cytoplasm. It localises to the cytoskeleton. The protein resides in the cilium axoneme. Its function is as follows. Force generating protein of respiratory cilia. Produces force towards the minus ends of microtubules. Dynein has ATPase activity. The polypeptide is Dynein axonemal light chain 4 (Dnal4) (Mus musculus (Mouse)).